We begin with the raw amino-acid sequence, 386 residues long: Acyl-[acyl-carrier-protein] dehydrogenase MbtN (386 aa).

Belongs to the acyl-CoA dehydrogenase family. FAD serves as cofactor.

It participates in siderophore biosynthesis; mycobactin biosynthesis. Catalyzes the dehydrogenation at the alpha-beta position of ACP-bound acyl chains. This results in the introduction of a double bond in the lipidic chain, which is further transferred to the epsilon-amino group of lysine residue in the mycobactin core by MbtK. The polypeptide is Acyl-[acyl-carrier-protein] dehydrogenase MbtN (mbtN) (Mycobacterium bovis (strain ATCC BAA-935 / AF2122/97)).